A 353-amino-acid chain; its full sequence is Phosphate acyltransferase (353 aa).

The protein belongs to the PlsX family. Homodimer. Probably interacts with PlsY.

It is found in the cytoplasm. The catalysed reaction is a fatty acyl-[ACP] + phosphate = an acyl phosphate + holo-[ACP]. It participates in lipid metabolism; phospholipid metabolism. Functionally, catalyzes the reversible formation of acyl-phosphate (acyl-PO(4)) from acyl-[acyl-carrier-protein] (acyl-ACP). This enzyme utilizes acyl-ACP as fatty acyl donor, but not acyl-CoA. This chain is Phosphate acyltransferase, found in Bradyrhizobium sp. (strain BTAi1 / ATCC BAA-1182).